The primary structure comprises 294 residues: 33 kDa chaperonin (294 aa).

2 cysteine pairs are disulfide-bonded: Cys230–Cys232 and Cys263–Cys266.

It belongs to the HSP33 family. Post-translationally, under oxidizing conditions two disulfide bonds are formed involving the reactive cysteines. Under reducing conditions zinc is bound to the reactive cysteines and the protein is inactive.

The protein resides in the cytoplasm. Its function is as follows. Redox regulated molecular chaperone. Protects both thermally unfolding and oxidatively damaged proteins from irreversible aggregation. Plays an important role in the bacterial defense system toward oxidative stress. The polypeptide is 33 kDa chaperonin (Chromobacterium violaceum (strain ATCC 12472 / DSM 30191 / JCM 1249 / CCUG 213 / NBRC 12614 / NCIMB 9131 / NCTC 9757 / MK)).